Reading from the N-terminus, the 500-residue chain is MSAQFSLPATGLATQLELSKKLPEDIDALVVPTFKGEDGLELAASGLFDENLEIAIWDLLVAVGATGKQGEVVRIPSIEGIEVDFIVGVGLGDNDSLDDDTLRRAAGDAARSLAGVQHVATTLGAFGLQPAVEGFALGAYNYTGVRSKQKKPLPLEKVTFISLGDKKAAKEEFTVGQIIAESVALCRDLVNAPSSHLYPESYAAIIRDTAEKIGLGVEILDEKKLEKQGFGGILAVGTGSSRKPRLVRLTWAPKKAKKSIALVGKGITFDTGGISLKPGAGMDDMISDMGGSATMVATIIAAARLGVKLNVTATIPLAENMPGGNAFRPGDVITHYGGITSEILNTDAEGRLVLADAIARASEDKPDYLLNVATLTGAQIVALGDRTSGVMGSDEFRDSVALTGRTVGEPAWAMPLPEEIGEDVKSPVADIRNVTGSRSGGMMAAGWYLSHFVGEGIEWAHVDIAGPAYNKAGVYGYIPKRATGVPVRTFVQVLSNLAEQ.

Residues lysine 265 and aspartate 270 each coordinate Mn(2+). The active site involves lysine 277. Positions 288, 347, and 349 each coordinate Mn(2+). Arginine 351 is an active-site residue.

Belongs to the peptidase M17 family. Requires Mn(2+) as cofactor.

The protein localises to the cytoplasm. The enzyme catalyses Release of an N-terminal amino acid, Xaa-|-Yaa-, in which Xaa is preferably Leu, but may be other amino acids including Pro although not Arg or Lys, and Yaa may be Pro. Amino acid amides and methyl esters are also readily hydrolyzed, but rates on arylamides are exceedingly low.. It carries out the reaction Release of an N-terminal amino acid, preferentially leucine, but not glutamic or aspartic acids.. Functionally, presumably involved in the processing and regular turnover of intracellular proteins. Catalyzes the removal of unsubstituted N-terminal amino acids from various peptides. The polypeptide is Probable cytosol aminopeptidase (Corynebacterium diphtheriae (strain ATCC 700971 / NCTC 13129 / Biotype gravis)).